The chain runs to 704 residues: Elongation factor G (704 aa).

The tr-type G domain occupies 8-290 (ARYRNIGISA…AVIDYLPSPV (283 aa)). GTP-binding positions include 17–24 (AHIDAGKT), 88–92 (DTPGH), and 142–145 (NKMD).

The protein belongs to the TRAFAC class translation factor GTPase superfamily. Classic translation factor GTPase family. EF-G/EF-2 subfamily.

It is found in the cytoplasm. In terms of biological role, catalyzes the GTP-dependent ribosomal translocation step during translation elongation. During this step, the ribosome changes from the pre-translocational (PRE) to the post-translocational (POST) state as the newly formed A-site-bound peptidyl-tRNA and P-site-bound deacylated tRNA move to the P and E sites, respectively. Catalyzes the coordinated movement of the two tRNA molecules, the mRNA and conformational changes in the ribosome. This Salmonella agona (strain SL483) protein is Elongation factor G.